We begin with the raw amino-acid sequence, 520 residues long: GMP synthase [glutamine-hydrolyzing] (520 aa).

Residues 12-205 (KIIVLDYGSQ…AIFICGARGD (194 aa)) form the Glutamine amidotransferase type-1 domain. The active-site Nucleophile is cysteine 89. Active-site residues include histidine 179 and glutamate 181. Residues 206–395 (WSMDNFIDMQ…LGMPENIVWR (190 aa)) form the GMPS ATP-PPase domain. 233-239 (SGGVDSS) is a binding site for ATP.

As to quaternary structure, homodimer.

It carries out the reaction XMP + L-glutamine + ATP + H2O = GMP + L-glutamate + AMP + diphosphate + 2 H(+). It functions in the pathway purine metabolism; GMP biosynthesis; GMP from XMP (L-Gln route): step 1/1. In terms of biological role, catalyzes the synthesis of GMP from XMP. The protein is GMP synthase [glutamine-hydrolyzing] of Streptococcus uberis (strain ATCC BAA-854 / 0140J).